Consider the following 712-residue polypeptide: Ribosomal RNA large subunit methyltransferase K/L (712 aa).

Residues 42–153 (QALRIVMWSR…KGRASLSIDL (112 aa)) form the THUMP domain.

Belongs to the methyltransferase superfamily. RlmKL family.

It is found in the cytoplasm. The enzyme catalyses guanosine(2445) in 23S rRNA + S-adenosyl-L-methionine = N(2)-methylguanosine(2445) in 23S rRNA + S-adenosyl-L-homocysteine + H(+). It carries out the reaction guanosine(2069) in 23S rRNA + S-adenosyl-L-methionine = N(2)-methylguanosine(2069) in 23S rRNA + S-adenosyl-L-homocysteine + H(+). In terms of biological role, specifically methylates the guanine in position 2445 (m2G2445) and the guanine in position 2069 (m7G2069) of 23S rRNA. The protein is Ribosomal RNA large subunit methyltransferase K/L of Stenotrophomonas maltophilia (strain R551-3).